The following is a 294-amino-acid chain: N-acetylmuramic acid 6-phosphate etherase (294 aa).

The region spanning 54–217 is the SIS domain; it reads VTKSFEEEGR…STASMIGVGK (164 aa). Catalysis depends on glutamate 82, which acts as the Proton donor. Glutamate 113 is a catalytic residue.

It belongs to the GCKR-like family. MurNAc-6-P etherase subfamily. As to quaternary structure, homodimer.

It catalyses the reaction N-acetyl-D-muramate 6-phosphate + H2O = N-acetyl-D-glucosamine 6-phosphate + (R)-lactate. Its pathway is amino-sugar metabolism; N-acetylmuramate degradation. Specifically catalyzes the cleavage of the D-lactyl ether substituent of MurNAc 6-phosphate, producing GlcNAc 6-phosphate and D-lactate. The chain is N-acetylmuramic acid 6-phosphate etherase from Bacillus mycoides (strain KBAB4) (Bacillus weihenstephanensis).